Reading from the N-terminus, the 429-residue chain is Trigger factor (429 aa).

Residues 164-249 form the PPIase FKBP-type domain; it reads GDWAVIDHEG…LKALKVRQAP (86 aa).

It belongs to the FKBP-type PPIase family. Tig subfamily.

It localises to the cytoplasm. It carries out the reaction [protein]-peptidylproline (omega=180) = [protein]-peptidylproline (omega=0). Functionally, involved in protein export. Acts as a chaperone by maintaining the newly synthesized protein in an open conformation. Functions as a peptidyl-prolyl cis-trans isomerase. The protein is Trigger factor of Anaeromyxobacter dehalogenans (strain 2CP-C).